The following is a 589-amino-acid chain: Vomeromodulin (589 aa).

Positions 1–29 (MWVLQALAIMLSIQAGVLDLVEVPPVVRS) are cleaved as a signal peptide. Disordered regions lie at residues 49 to 71 (GLND…SRGG) and 146 to 170 (LLGK…GLGQ). Asparagine 419 and asparagine 437 each carry an N-linked (GlcNAc...) asparagine glycan.

In terms of processing, N-glycosylated. The N-glycans consist mainly of complex sialylated and fucosylated biantennary structures. As to expression, abundant in the lateral nasal glands. Also present in the posterior septal and vomeronasal glands.

It is found in the secreted. The protein is Vomeromodulin of Rattus norvegicus (Rat).